A 316-amino-acid polypeptide reads, in one-letter code: L-lactate dehydrogenase (316 aa).

Residues Val15, Asp37, Lys42, Tyr68, and 82 to 83 (GL) contribute to the NAD(+) site. Residues Gln85, Arg91, and 123 to 126 (NPVD) contribute to the substrate site. Residues 121–123 (ASN) and Thr146 each bind NAD(+). 151–154 (DTSR) serves as a coordination point for substrate. Positions 156 and 171 each coordinate beta-D-fructose 1,6-bisphosphate. The Proton acceptor role is filled by His178. Tyr222 carries the post-translational modification Phosphotyrosine. Thr231 provides a ligand contact to substrate.

This sequence belongs to the LDH/MDH superfamily. LDH family. As to quaternary structure, homotetramer.

Its subcellular location is the cytoplasm. The catalysed reaction is (S)-lactate + NAD(+) = pyruvate + NADH + H(+). The protein operates within fermentation; pyruvate fermentation to lactate; (S)-lactate from pyruvate: step 1/1. Allosterically activated by fructose 1,6-bisphosphate (FBP). Its function is as follows. Catalyzes the conversion of lactate to pyruvate. The chain is L-lactate dehydrogenase from Borrelia hermsii (strain HS1 / DAH).